The chain runs to 334 residues: Formamidase (334 aa).

One can recognise a CN hydrolase domain in the interval 14-260 (FLVAAIQFPV…WEIVTGEIYP (247 aa)). Glu60 (proton acceptor) is an active-site residue. Catalysis depends on Lys133, which acts as the Proton donor. Cys166 acts as the Nucleophile in catalysis.

It belongs to the carbon-nitrogen hydrolase superfamily. Aliphatic amidase family.

The catalysed reaction is formamide + H2O = formate + NH4(+). In terms of biological role, is an aliphatic amidase with a restricted substrate specificity, as it only hydrolyzes formamide. This is Formamidase from Helicobacter pylori (strain J99 / ATCC 700824) (Campylobacter pylori J99).